A 557-amino-acid chain; its full sequence is ETHYLENE INSENSITIVE 3-like 5 protein (557 aa).

Disordered stretches follow at residues 1–23 (MVEVQDLEPLSPIQDYDEDDLEE) and 61–96 (NLNSVISSPSSSTSASSSSSSSVIVRRTEASRRKKM). The span at 64–82 (SVISSPSSSTSASSSSSSS) shows a compositional bias: low complexity. Positions 270–311 (ERVRRLARQSKCLQDKMMAKETDTWSRVLNQEEARLNRLKIS) form a coiled coil.

This sequence belongs to the EIN3 family.

It is found in the nucleus. In terms of biological role, putative transcription factor that may be involved in the ethylene response pathway. This is ETHYLENE INSENSITIVE 3-like 5 protein (EIL5) from Arabidopsis thaliana (Mouse-ear cress).